Here is a 269-residue protein sequence, read N- to C-terminus: Phosphate import ATP-binding protein PstB 1 (269 aa).

Positions 25–264 (LSTEDLHVFY…PQVDLTNDYI (240 aa)) constitute an ABC transporter domain. 57-64 (GPSGSGKS) provides a ligand contact to ATP.

It belongs to the ABC transporter superfamily. Phosphate importer (TC 3.A.1.7) family. The complex is composed of two ATP-binding proteins (PstB), two transmembrane proteins (PstC and PstA) and a solute-binding protein (PstS).

It localises to the cell membrane. It catalyses the reaction phosphate(out) + ATP + H2O = ADP + 2 phosphate(in) + H(+). Part of the ABC transporter complex PstSACB involved in phosphate import. Responsible for energy coupling to the transport system. In Lactiplantibacillus plantarum (strain ATCC BAA-793 / NCIMB 8826 / WCFS1) (Lactobacillus plantarum), this protein is Phosphate import ATP-binding protein PstB 1.